We begin with the raw amino-acid sequence, 566 residues long: Beta,beta-carotene 15,15'-dioxygenase (566 aa).

Fe cation contacts are provided by His172, His237, His308, and His514. The disordered stretch occupies residues 529–566 (TPAKTQEDENSDHPTGLTAPGLGHGENDFTAGHGGKSL).

The protein belongs to the carotenoid oxygenase family. Requires Fe(2+) as cofactor.

It is found in the cytoplasm. The protein resides in the cytosol. It carries out the reaction all-trans-beta-carotene + O2 = 2 all-trans-retinal. It participates in cofactor metabolism; retinol metabolism. Symmetrically cleaves beta-carotene into two molecules of retinal using a dioxygenase mechanism. The sequence is that of Beta,beta-carotene 15,15'-dioxygenase from Rattus norvegicus (Rat).